Reading from the N-terminus, the 357-residue chain is tRNA-specific 2-thiouridylase MnmA (357 aa).

ATP contacts are provided by residues 7–14 (GLSGGVDS) and Met-33. The segment at 94–96 (NPD) is interaction with target base in tRNA. The Nucleophile role is filled by Cys-99. Cys-99 and Cys-195 are oxidised to a cystine. Gly-123 serves as a coordination point for ATP. Residues 145 to 147 (KDQ) form an interaction with tRNA region. Cys-195 functions as the Cysteine persulfide intermediate in the catalytic mechanism. Residues 303–304 (RY) are interaction with tRNA.

This sequence belongs to the MnmA/TRMU family.

Its subcellular location is the cytoplasm. The catalysed reaction is S-sulfanyl-L-cysteinyl-[protein] + uridine(34) in tRNA + AH2 + ATP = 2-thiouridine(34) in tRNA + L-cysteinyl-[protein] + A + AMP + diphosphate + H(+). Catalyzes the 2-thiolation of uridine at the wobble position (U34) of tRNA, leading to the formation of s(2)U34. The sequence is that of tRNA-specific 2-thiouridylase MnmA from Akkermansia muciniphila (strain ATCC BAA-835 / DSM 22959 / JCM 33894 / BCRC 81048 / CCUG 64013 / CIP 107961 / Muc).